The chain runs to 170 residues: Ureidoglycolate lyase (170 aa).

Belongs to the ureidoglycolate lyase family. Homodimer. The cofactor is Ni(2+).

It carries out the reaction (S)-ureidoglycolate = urea + glyoxylate. It functions in the pathway nitrogen metabolism; (S)-allantoin degradation. Its function is as follows. Catalyzes the catabolism of the allantoin degradation intermediate (S)-ureidoglycolate, generating urea and glyoxylate. Involved in the utilization of allantoin as nitrogen source. This is Ureidoglycolate lyase from Pseudomonas savastanoi pv. phaseolicola (strain 1448A / Race 6) (Pseudomonas syringae pv. phaseolicola (strain 1448A / Race 6)).